Reading from the N-terminus, the 269-residue chain is Glutamate racemase (269 aa).

Substrate-binding positions include 14 to 15 (DS) and 46 to 47 (YS). Cys-78 serves as the catalytic Proton donor/acceptor. 79–80 (NT) serves as a coordination point for substrate. Cys-189 acts as the Proton donor/acceptor in catalysis. 190–191 (TH) is a binding site for substrate.

The protein belongs to the aspartate/glutamate racemases family.

It carries out the reaction L-glutamate = D-glutamate. The protein operates within cell wall biogenesis; peptidoglycan biosynthesis. In terms of biological role, provides the (R)-glutamate required for cell wall biosynthesis. In Haemophilus influenzae (strain ATCC 51907 / DSM 11121 / KW20 / Rd), this protein is Glutamate racemase.